The following is a 539-amino-acid chain: uncharacterized protein (539 aa).

2 consecutive ABC transporter domains span residues 8–265 and 307–537; these read VRIT…SRAL and IELD…IGDM. 339-346 is a binding site for ATP; it reads GDNGSGKS.

The protein belongs to the ABC transporter superfamily.

It localises to the mitochondrion. This is an uncharacterized protein from Saccharomyces cerevisiae (strain ATCC 204508 / S288c) (Baker's yeast).